Consider the following 949-residue polypeptide: Syndetin (949 aa).

Positions 1–28 (MQKIKSLMTRQGLRSPQESVHDLSPIEN) are disordered. Positions 8–18 (MTRQGLRSPQE) are enriched in polar residues. Coiled coils occupy residues 82–104 (SLQE…LERV) and 198–226 (YSCI…LSKI). The interval 509-581 (FEIQADSKDD…ETLRSRKKSD (73 aa)) is disordered. A compositionally biased stretch (basic and acidic residues) spans 569 to 581 (VSRETLRSRKKSD).

This sequence belongs to the syndetin family. Component of the endosome-associated retrograde protein (EARP) complex.

The protein localises to the recycling endosome. Its subcellular location is the membrane. In terms of biological role, acts as a component of the EARP complex that is involved in endocytic recycling. The EARP complex associates with Rab4-positive endosomes and promotes recycling of internalized transferrin receptor (TFRC) to the plasma membrane. The sequence is that of Syndetin from Gallus gallus (Chicken).